Here is a 157-residue protein sequence, read N- to C-terminus: Transcription initiation factor IIA large subunit (157 aa).

The protein belongs to the TFIIA subunit 1 family. As to quaternary structure, TFIIA is a heterodimer of the large subunit and the small subunit gamma.

It is found in the nucleus. Functionally, TFIIA is a component of the transcription machinery of RNA polymerase II and plays an important role in transcriptional activation. This is Transcription initiation factor IIA large subunit (TOA1) from Encephalitozoon cuniculi (strain GB-M1) (Microsporidian parasite).